Reading from the N-terminus, the 274-residue chain is Undecaprenyl-diphosphatase (274 aa).

A run of 7 helical transmembrane segments spans residues 4–24, 41–61, 83–103, 108–128, 184–204, 218–238, and 246–266; these read PLFVIALILGIVEGLTEFLPI, DATSKVFKIVIQFAAILAVCW, FVGLLFIGFLPAAVLGLMFHS, LLFNPLTVATALVVGGVLILW, AAEFSFFLSIPTMFAATVYDL, VFAIGFVASFFAAMFAVKAFI, and FIAFAWYRIVFGLVVLATWQL.

It belongs to the UppP family.

It is found in the cell inner membrane. The enzyme catalyses di-trans,octa-cis-undecaprenyl diphosphate + H2O = di-trans,octa-cis-undecaprenyl phosphate + phosphate + H(+). Catalyzes the dephosphorylation of undecaprenyl diphosphate (UPP). Confers resistance to bacitracin. This chain is Undecaprenyl-diphosphatase, found in Aromatoleum aromaticum (strain DSM 19018 / LMG 30748 / EbN1) (Azoarcus sp. (strain EbN1)).